Here is a 137-residue protein sequence, read N- to C-terminus: Cellular retinoic acid-binding protein 1 (137 aa).

The Nuclear localization signal signature appears at 21–31 (RALGVNAMLRK). 132-134 (RIY) is an all-trans-retinoate binding site.

Belongs to the calycin superfamily. Fatty-acid binding protein (FABP) family.

Its subcellular location is the cytoplasm. Functionally, cytosolic CRABPs may regulate the access of retinoic acid to the nuclear retinoic acid receptors. The protein is Cellular retinoic acid-binding protein 1 (CRABP1) of Pelodiscus sinensis (Chinese softshell turtle).